The sequence spans 429 residues: Serine--tRNA ligase (429 aa).

Position 235 to 237 (235 to 237 (TAE)) interacts with L-serine. An ATP-binding site is contributed by 266–268 (RSE). Glutamate 289 serves as a coordination point for L-serine. Residue 353 to 356 (EISS) participates in ATP binding. Serine 389 contacts L-serine.

This sequence belongs to the class-II aminoacyl-tRNA synthetase family. Type-1 seryl-tRNA synthetase subfamily. As to quaternary structure, homodimer. The tRNA molecule binds across the dimer.

It is found in the cytoplasm. The enzyme catalyses tRNA(Ser) + L-serine + ATP = L-seryl-tRNA(Ser) + AMP + diphosphate + H(+). It carries out the reaction tRNA(Sec) + L-serine + ATP = L-seryl-tRNA(Sec) + AMP + diphosphate + H(+). It functions in the pathway aminoacyl-tRNA biosynthesis; selenocysteinyl-tRNA(Sec) biosynthesis; L-seryl-tRNA(Sec) from L-serine and tRNA(Sec): step 1/1. Catalyzes the attachment of serine to tRNA(Ser). Is also able to aminoacylate tRNA(Sec) with serine, to form the misacylated tRNA L-seryl-tRNA(Sec), which will be further converted into selenocysteinyl-tRNA(Sec). This Actinobacillus succinogenes (strain ATCC 55618 / DSM 22257 / CCUG 43843 / 130Z) protein is Serine--tRNA ligase.